The chain runs to 196 residues: Beta-crystallin A4 (196 aa).

Threonine 2 carries the post-translational modification N-acetylthreonine. The segment at 2–11 is N-terminal arm; sequence TLQCTKSAGH. Beta/gamma crystallin 'Greek key' domains follow at residues 12 to 51 and 52 to 98; these read WRMVVWDEEGFQGRRHEFTAECPSVLELGFETVRSLKVLS and GAWV…RPVA. A connecting peptide region spans residues 99 to 104; it reads CANHRD. 2 consecutive Beta/gamma crystallin 'Greek key' domains span residues 105–146 and 147–195; these read SRLT…HVQS and GAWV…RRIQ.

It belongs to the beta/gamma-crystallin family. As to quaternary structure, homo/heterodimer, or complexes of higher-order. The structure of beta-crystallin oligomers seems to be stabilized through interactions between the N-terminal arms.

Its function is as follows. Crystallins are the dominant structural components of the vertebrate eye lens. This Mus musculus (Mouse) protein is Beta-crystallin A4 (Cryba4).